A 160-amino-acid chain; its full sequence is uncharacterized protein (160 aa).

It is found in the cytoplasm. Its subcellular location is the nucleus. This is an uncharacterized protein from Schizosaccharomyces pombe (strain 972 / ATCC 24843) (Fission yeast).